The primary structure comprises 1136 residues: Phytochrome (1136 aa).

A disordered region spans residues 1–28; that stretch reads MSTTRPRAATHSASSGSVSRSSKHSARV. Positions 11–20 are enriched in low complexity; that stretch reads HSASSGSVSR. The region spanning 231–414 is the GAF domain; sequence DIRLLCDTVV…VFGIQLNKEV (184 aa). Cys336 contacts phytochromobilin. 2 consecutive PAS domains span residues 629 to 699 and 762 to 833; these read VTNE…LQGE and DYRA…TKLR. The Histidine kinase domain maps to 913–1132; it reads YIRQEIRNPL…IINVEFPLAQ (220 aa).

It belongs to the phytochrome family. Homodimer. In terms of processing, contains one covalently linked phytochromobilin chromophore.

Functionally, regulatory photoreceptor which exists in two forms that are reversibly interconvertible by light: the Pr form that absorbs maximally in the red region of the spectrum and the Pfr form that absorbs maximally in the far-red region. Photoconversion of Pr to Pfr induces an array of morphogenic responses, whereas reconversion of Pfr to Pr cancels the induction of those responses. Pfr controls the expression of a number of nuclear genes including those encoding the small subunit of ribulose-bisphosphate carboxylase, chlorophyll A/B binding protein, protochlorophyllide reductase, rRNA, etc. It also controls the expression of its own gene(s) in a negative feedback fashion. The chain is Phytochrome from Picea abies (Norway spruce).